The primary structure comprises 554 residues: Inactive serine/threonine-protein kinase/endoribonuclease IRE1-like (554 aa).

A signal peptide spans 1–17 (MWLLAISLVGLLVVVVC). The interval 36 to 85 (KRDKNSAPRVSASGEDGTKNEQVEKKSDPSGGLGEENEKTNSESKVLSVP) is disordered. A compositionally biased stretch (basic and acidic residues) spans 51-63 (DGTKNEQVEKKSD). One can recognise a Protein kinase domain in the interval 121–408 (LVSTNEMKYG…ATQVLLHPLF (288 aa)). K150 is an ATP binding site. The KEN domain maps to 411–554 (SEKRLFFLRE…GEEAFEKYFN (144 aa)).

The protein belongs to the protein kinase superfamily. Ser/Thr protein kinase family.

The polypeptide is Inactive serine/threonine-protein kinase/endoribonuclease IRE1-like (Arabidopsis thaliana (Mouse-ear cress)).